The sequence spans 278 residues: Protoheme IX farnesyltransferase (278 aa).

9 consecutive transmembrane segments (helical) span residues 12 to 32 (VIWLLILSSVVGYVYAAGTVD), 36 to 56 (LAALTAAATLAVGGSAAFNHY), 72 to 92 (PLPAGAIPPSNALVYSLALSA), 105 to 124 (LPGVFVALGWFFYAVVYTVW), 130 to 150 (WLNILGGGFAGNATFLGGYAL), 157 to 177 (LPAVLISFAIYLWIPSHIWAL), 204 to 224 (AIISALNIASAAYILWLYLVF), 228 to 248 (LPGLALVLAGVAGTVATSALA), and 257 to 277 (MWRMYKASSPILTLFLLALVF).

The protein belongs to the UbiA prenyltransferase family. Protoheme IX farnesyltransferase subfamily.

It localises to the cell membrane. The enzyme catalyses heme b + (2E,6E)-farnesyl diphosphate + H2O = Fe(II)-heme o + diphosphate. Its pathway is porphyrin-containing compound metabolism; heme O biosynthesis; heme O from protoheme: step 1/1. Converts heme B (protoheme IX) to heme O by substitution of the vinyl group on carbon 2 of heme B porphyrin ring with a hydroxyethyl farnesyl side group. The polypeptide is Protoheme IX farnesyltransferase (Pyrobaculum neutrophilum (strain DSM 2338 / JCM 9278 / NBRC 100436 / V24Sta) (Thermoproteus neutrophilus)).